A 791-amino-acid polypeptide reads, in one-letter code: Interleukin-17 receptor C (791 aa).

The N-terminal stretch at 1–20 (MPVPWFLLSLALGRSPVVLS) is a signal peptide. At 21–538 (LERLVGPQDA…CPMDKYIHKR (518 aa)) the chain is on the extracellular side. Residues asparagine 189 and asparagine 257 are each glycosylated (N-linked (GlcNAc...) asparagine). Cysteine 265 and cysteine 277 are joined by a disulfide. Residues asparagine 284, asparagine 297, asparagine 324, and asparagine 334 are each glycosylated (N-linked (GlcNAc...) asparagine). Disulfide bonds link cysteine 341–cysteine 391, cysteine 343–cysteine 359, and cysteine 400–cysteine 409. N-linked (GlcNAc...) asparagine glycans are attached at residues asparagine 420, asparagine 443, and asparagine 477. An intrachain disulfide couples cysteine 439 to cysteine 453. 2 cysteine pairs are disulfide-bonded: cysteine 481/cysteine 488 and cysteine 515/cysteine 529. A helical membrane pass occupies residues 539 to 559 (WALVWLACLLFAAALSLILLL). The Cytoplasmic segment spans residues 560 to 791 (KKDHAKGWLR…GAGPGAGDGT (232 aa)). The 153-residue stretch at 583 to 735 (GRAALLLYSA…LPSQLPDFLG (153 aa)) folds into the SEFIR domain. The segment at 762–791 (ALDSYFHPPGTPAPGRGVGPGAGPGAGDGT) is disordered. Residues 777 to 791 (RGVGPGAGPGAGDGT) show a composition bias toward gly residues.

As to quaternary structure, homodimer; disulfide-linked. Heterodimer with IL17RA. Heterodimerization with IL17RA is independent of the cytoplasmic tail. Associates with non-glycosylated IL17RA constitutively. Binding of IL17A and IL17F induces association with glycosylated IL17RA. Forms complexes with 2:1 binding stoichiometry: two receptor chains for one interleukin molecule. IL17A homodimer preferentially drives the formation of IL17RA-IL17RC heterodimeric receptor complex, whereas IL17F homodimer forms predominantly complexes with IL17RC homodimer. IL17A-IL17F forms complexes with IL17RA-IL17RC, but with lower affinity when compared to IL17A homodimer. IL17RC chain cannot distinguish between IL17A and IL17F molecules, potentially enabling the formation of topologically distinct complexes. Interacts (through SEFIR domain and extended downstream region) with TRAF3IP2/ACT1 (phosphorylated). In terms of tissue distribution, expressed in prostate, skeletal muscle, kidney and placenta (at protein level). Expressed in brain, cartilage, colon, heart, intestine, kidney, liver, lung, muscle, placenta, and prostate. Also detected in thyroid, trachea and adrenal gland. Low expression in thymus and leukocytes.

The protein resides in the cell membrane. In terms of biological role, receptor for IL17A and IL17F, major effector cytokines of innate and adaptive immune system involved in antimicrobial host defense and maintenance of tissue integrity. Receptor for IL17A and IL17F, major effector cytokines of innate and adaptive immune system involved in antimicrobial host defense and maintenance of tissue integrity. Receptor for IL17A and IL17F homodimers as part of a heterodimeric complex with IL17RA. Receptor for the heterodimer formed by IL17A and IL17B as part of a heterodimeric complex with IL17RA. Has also been shown to be the cognate receptor for IL17F and to bind IL17A with high affinity without the need for IL17RA. Upon binding of IL17F homodimer triggers downstream activation of TRAF6 and NF-kappa-B signaling pathway. Induces transcriptional activation of IL33, a potent cytokine that stimulates group 2 innate lymphoid cells and adaptive T-helper 2 cells involved in pulmonary allergic response to fungi. Promotes sympathetic innervation of peripheral organs by coordinating the communication between gamma-delta T cells and parenchymal cells. Stimulates sympathetic innervation of thermogenic adipose tissue by driving TGFB1 expression. Binding of IL17A-IL17F to IL17RA-IL17RC heterodimeric receptor complex triggers homotypic interaction of IL17RA and IL17RC chains with TRAF3IP2 adapter through SEFIR domains. This leads to downstream TRAF6-mediated activation of NF-kappa-B and MAPkinase pathways ultimately resulting in transcriptional activation of cytokines, chemokines, antimicrobial peptides and matrix metalloproteinases, with potential strong immune inflammation. Primarily induces neutrophil activation and recruitment at infection and inflammatory sites. Stimulates the production of antimicrobial beta-defensins DEFB1, DEFB103A, and DEFB104A by mucosal epithelial cells, limiting the entry of microbes through the epithelial barriers. Functionally, receptor for both IL17A and IL17F. Its function is as follows. Does not bind IL17A or IL17F. The sequence is that of Interleukin-17 receptor C (IL17RC) from Homo sapiens (Human).